Consider the following 68-residue polypeptide: Alpha-conotoxin PIVA (68 aa).

An N-terminal signal peptide occupies residues 1-16; the sequence is MFTVFLLVVLATTVVS. Residues 17–41 constitute a propeptide that is removed on maturation; it reads FTSDRASDDRNTNDKASRLLSHVVR. Cystine bridges form between cysteine 43/cysteine 57, cysteine 44/cysteine 52, and cysteine 55/cysteine 64. 4-hydroxyproline; partial occurs at positions 48 and 54. Position 61 is a 4-hydroxyproline (proline 61). Residue glutamine 66 is modified to Glutamine amide.

It belongs to the conotoxin A superfamily. In terms of tissue distribution, expressed by the venom duct.

The protein resides in the secreted. In terms of biological role, alpha-conotoxins act on postsynaptic membranes, they bind to the nicotinic acetylcholine receptors (nAChR) and thus inhibit them. This toxin has higher affinity for the adult subtype (alpha-1-beta-1-gamma-delta (CHRNA1-CHRNB1-CHRNG-CHRND) subunits) (IC(50)=2.3 nM) of the receptor than for the fetal subtype (alpha-1-beta-1-epsilon-delta (CHRNA1-CHRNB1-CHRND-CHRNE) subunits) (IC(50)=22 nM). The chain is Alpha-conotoxin PIVA from Conus purpurascens (Purple cone).